Here is a 96-residue protein sequence, read N- to C-terminus: Large ribosomal subunit protein bL28 (96 aa).

Belongs to the bacterial ribosomal protein bL28 family.

The sequence is that of Large ribosomal subunit protein bL28 from Orientia tsutsugamushi (strain Boryong) (Rickettsia tsutsugamushi).